Here is a 380-residue protein sequence, read N- to C-terminus: ATP phosphoribosyltransferase regulatory subunit (380 aa).

It belongs to the class-II aminoacyl-tRNA synthetase family. HisZ subfamily. As to quaternary structure, heteromultimer composed of HisG and HisZ subunits.

It localises to the cytoplasm. Its pathway is amino-acid biosynthesis; L-histidine biosynthesis; L-histidine from 5-phospho-alpha-D-ribose 1-diphosphate: step 1/9. Functionally, required for the first step of histidine biosynthesis. May allow the feedback regulation of ATP phosphoribosyltransferase activity by histidine. The protein is ATP phosphoribosyltransferase regulatory subunit of Thermoanaerobacter sp. (strain X514).